The chain runs to 137 residues: Small ribosomal subunit protein bS6 (137 aa).

The tract at residues 96-137 is disordered; the sequence is ITEASPMAKAKDERDTRRSSEERAPRAEATEEAEESAENTAE. The segment covering 104–124 has biased composition (basic and acidic residues); it reads KAKDERDTRRSSEERAPRAEA. Positions 125-137 are enriched in acidic residues; it reads TEEAEESAENTAE.

It belongs to the bacterial ribosomal protein bS6 family.

Its function is as follows. Binds together with bS18 to 16S ribosomal RNA. The protein is Small ribosomal subunit protein bS6 of Shewanella pealeana (strain ATCC 700345 / ANG-SQ1).